Reading from the N-terminus, the 775-residue chain is Venom dipeptidyl peptidase 4 (775 aa).

The signal sequence occupies residues 1–23 (MEVLVQLALLLVVHGSLVVLVAG). N-linked (GlcNAc...) asparagine glycosylation is found at Asn68 and Asn239. 2 cysteine pairs are disulfide-bonded: Cys450/Cys453 and Cys463/Cys481. Asn473, Asn505, Asn578, and Asn631 each carry an N-linked (GlcNAc...) asparagine glycan. Ser639 acts as the Charge relay system in catalysis. Residues Cys659 and Cys770 are joined by a disulfide bond. 2 N-linked (GlcNAc...) asparagine glycosylation sites follow: Asn689 and Asn694. Active-site charge relay system residues include Asp718 and His750.

The protein belongs to the peptidase S9B family. DPPIV subfamily. Expressed by the venom duct.

Its subcellular location is the secreted. It catalyses the reaction Release of an N-terminal dipeptide, Xaa-Yaa-|-Zaa-, from a polypeptide, preferentially when Yaa is Pro, provided Zaa is neither Pro nor hydroxyproline.. Its activity is regulated as follows. Inhibited by diprotin A. Venom dipeptidyl-peptidase which removes N-terminal dipeptides sequentially from polypeptides having unsubstituted N-termini provided that the penultimate residue is proline. May process promelittin into its active form and/or modulate the chemotactic activity of immune cells after the insect sting. The polypeptide is Venom dipeptidyl peptidase 4 (Apis mellifera (Honeybee)).